The sequence spans 453 residues: Phosphoglucosamine mutase (453 aa).

Catalysis depends on S102, which acts as the Phosphoserine intermediate. Residues S102, D243, D245, and D247 each coordinate Mg(2+). S102 carries the post-translational modification Phosphoserine.

The protein belongs to the phosphohexose mutase family. Mg(2+) serves as cofactor. In terms of processing, activated by phosphorylation.

It catalyses the reaction alpha-D-glucosamine 1-phosphate = D-glucosamine 6-phosphate. Its function is as follows. Catalyzes the conversion of glucosamine-6-phosphate to glucosamine-1-phosphate. This is Phosphoglucosamine mutase from Bartonella tribocorum (strain CIP 105476 / IBS 506).